Here is a 762-residue protein sequence, read N- to C-terminus: Acyl-homoserine lactone acylase PvdQ (762 aa).

The first 23 residues, 1 to 23 (MGMRTVLTGLAGMLLGSMMPVQA), serve as a signal peptide directing secretion. Positions 194-216 (ALSGEQAFQVAEQRRQRFRLERG) are cleaved as a propeptide — spacer peptide. Residue S217 is the Nucleophile of the active site.

The protein belongs to the peptidase S45 family. Heterodimer of an alpha subunit and a beta subunit processed from the same precursor.

The protein resides in the periplasm. It catalyses the reaction an N-acyl-L-homoserine lactone + H2O = L-homoserine lactone + a carboxylate. Catalyzes the deacylation of acyl-homoserine lactone (AHL or acyl-HSL), releasing homoserine lactone (HSL) and the corresponding fatty acid. Possesses a specificity for the degradation of long-chain acyl-HSLs (side chains of 11 to 14 carbons in length). Degrades 3-oxo-C12-HSL, one of the two main AHL signal molecules of P.aeruginosa, and thereby functions as a quorum quencher, inhibiting the las quorum-sensing system. Therefore, may enable P.aeruginosa to modulate its own quorum-sensing-dependent pathogenic potential. Also appears to be required for pyoverdin biosynthesis. In Pseudomonas aeruginosa (strain ATCC 15692 / DSM 22644 / CIP 104116 / JCM 14847 / LMG 12228 / 1C / PRS 101 / PAO1), this protein is Acyl-homoserine lactone acylase PvdQ (pvdQ).